We begin with the raw amino-acid sequence, 177 residues long: Large ribosomal subunit protein uL6 (177 aa).

The protein belongs to the universal ribosomal protein uL6 family. Part of the 50S ribosomal subunit.

Its function is as follows. This protein binds to the 23S rRNA, and is important in its secondary structure. It is located near the subunit interface in the base of the L7/L12 stalk, and near the tRNA binding site of the peptidyltransferase center. The sequence is that of Large ribosomal subunit protein uL6 from Methylobacterium nodulans (strain LMG 21967 / CNCM I-2342 / ORS 2060).